The following is an 867-amino-acid chain: MALPVYSLKSHIPITTIASAKMNYTPNKGMITANGRSRRIRLSPNKIVACAGEADRTFPSQSLEKTALFPDQFSEKNGTPSNFTPPNREFPPSFWNNDIINSITASHKVQTGDRKRIQTLISEIKNVFNSMGDGETSPSAYDTAWVARIPAVDGSEQPQFPQTLEWILQNQLKDGSWGEEFYFLAYDRLLATLACIITLTIWRTGNVQLHKGIEFFRKQVVRMDDEADNHRPSGFEIVFPAMLNEAKSLGLDLPYELPFIEQMVKKREAKLKMITTNVLYTIQTTLLYSLEGLHEIVDFDKIIKLQSKDGSFLGSPASTAAVFMQTGNTKCLEFLEFVLRKFRNHVPSDYPLDLFERLWVVDTVERLGIDRHFKKEIKDALDYVYSCWDERGIGWAKDSPIADIDDTAMGLRILRLHGYNVSPDVLKTFKDENGEFFCFMGQTQRGVTDMLNVYRCSQVAFPGETIMEEAKLCTERYLRNALENADAFDKWAIKKNIRGEVEYALKYPWHRSMPRLEVRSYIGNYGPNDVWLGKSLYMMPYISNEKYLELAKLDFNSVQSLHQEEIRELVRWCKSSGFTELKFTRDRVVETYFAVASSMFEPEFSTCRAVYTKISVLLVILDDLYDGYGSPDEIKLFSEAVKRWDLSLLEQMPDHMKICFLGLYNTVNEVAEEGRKTQGHDVLGYIRNLWEIQLAAFTREAEWSQGKYVPSFDEYIENAQVSIGVATILLITILFTEEDDILSHIDYGSKFLRLASLTARLANDIKTYQEERAHGEVVSAIQCYMKDRPEITEEEALKYVYGRMVNDLAELNSEYLKSNEMPQNCKRLVFDTARVAQLFTMEGDGLTYSDTMEIKEHIKKCLFEPAT.

Residues Met-1–Ala-49 constitute a chloroplast transit peptide. Lys-270 is a substrate binding site. Positions Asp-403–Asp-406 match the DXDD motif motif. Residue Lys-490 participates in substrate binding. Mg(2+)-binding residues include Asp-622, Asp-626, Asn-763, Asp-764, Thr-767, and Glu-771. The short motif at Asp-622–Asp-626 is the DDXXD motif element.

The protein belongs to the terpene synthase family. Tpsd subfamily. It depends on Mg(2+) as a cofactor.

It localises to the plastid. The protein resides in the chloroplast. It catalyses the reaction 8-hydroxycopalyl diphosphate = cis-abienol + diphosphate. The enzyme catalyses (2E,6E,10E)-geranylgeranyl diphosphate + H2O = 8-hydroxycopalyl diphosphate. Its pathway is terpene metabolism; oleoresin biosynthesis. Its function is as follows. Involved in the biosynthesis of cis-abienol, a labdane diterpene that can be used as synthesis precursor of ambergris substitution fragance products. Bifunctional class I/II enzyme in which both the bicyclization and water capture occur in the class II active site, resulting in an intermediary labda-13-en-8-ol diphosphate, which undergoes cleavage of the diphosphate group and final deprotonation at the class I active site. No activity with copalyl diphosphate as substrate. This chain is Bifunctional cis-abienol synthase, chloroplastic (CAS), found in Abies balsamea (Balsam fir).